Consider the following 348-residue polypeptide: uncharacterized protein (348 aa).

WD repeat units lie at residues 59-98 (GFQG…VVYS), 142-182 (GHTD…LIQT), 185-226 (DNLG…LLGT), 229-267 (QQPG…ELFS), 270-309 (GPSL…QVTT), and 312-347 (GHQG…SALA).

This is an uncharacterized protein from Synechocystis sp. (strain ATCC 27184 / PCC 6803 / Kazusa).